The chain runs to 401 residues: 1-deoxy-D-xylulose 5-phosphate reductoisomerase (401 aa).

Residues Thr10, Gly11, Ser12, Ile13, Gly36, Asn38, and Asn124 each contribute to the NADPH site. Lys125 is a binding site for 1-deoxy-D-xylulose 5-phosphate. Glu126 is a binding site for NADPH. Asp150 is a binding site for Mn(2+). 1-deoxy-D-xylulose 5-phosphate contacts are provided by Ser151, Glu152, Ser186, and His209. Glu152 is a binding site for Mn(2+). Gly215 contributes to the NADPH binding site. 1-deoxy-D-xylulose 5-phosphate contacts are provided by Ser222, Asn227, Lys228, and Glu231. Glu231 is a Mn(2+) binding site.

Belongs to the DXR family. Mg(2+) serves as cofactor. The cofactor is Mn(2+).

It catalyses the reaction 2-C-methyl-D-erythritol 4-phosphate + NADP(+) = 1-deoxy-D-xylulose 5-phosphate + NADPH + H(+). Its pathway is isoprenoid biosynthesis; isopentenyl diphosphate biosynthesis via DXP pathway; isopentenyl diphosphate from 1-deoxy-D-xylulose 5-phosphate: step 1/6. Catalyzes the NADPH-dependent rearrangement and reduction of 1-deoxy-D-xylulose-5-phosphate (DXP) to 2-C-methyl-D-erythritol 4-phosphate (MEP). The protein is 1-deoxy-D-xylulose 5-phosphate reductoisomerase of Vibrio parahaemolyticus serotype O3:K6 (strain RIMD 2210633).